The sequence spans 452 residues: UDP-N-acetylmuramoyl-L-alanine--L-glutamate ligase (452 aa).

118 to 124 (GSKGKST) serves as a coordination point for ATP.

It belongs to the MurCDEF family. MurD2 subfamily.

The protein localises to the cytoplasm. The enzyme catalyses UDP-N-acetyl-alpha-D-muramoyl-L-alanine + L-glutamate + ATP = UDP-N-acetyl-alpha-D-muramoyl-L-alanyl-L-glutamate + ADP + phosphate + H(+). It participates in cell wall biogenesis; peptidoglycan biosynthesis. In terms of biological role, cell wall formation. Catalyzes the addition of L-glutamate to the nucleotide precursor UDP-N-acetylmuramoyl-L-alanine. The sequence is that of UDP-N-acetylmuramoyl-L-alanine--L-glutamate ligase from Micromonospora sp. (strain ATCC 39149 / NRRL 15099 / SCC 1413).